The chain runs to 118 residues: Integration host factor subunit alpha (118 aa).

The tract at residues 97-118 (NGAMPMSTEESDENTAQSASGG) is disordered.

The protein belongs to the bacterial histone-like protein family. As to quaternary structure, heterodimer of an alpha and a beta chain.

This protein is one of the two subunits of integration host factor, a specific DNA-binding protein that functions in genetic recombination as well as in transcriptional and translational control. This chain is Integration host factor subunit alpha, found in Rhodopseudomonas palustris (strain ATCC BAA-98 / CGA009).